Here is a 561-residue protein sequence, read N- to C-terminus: Long-chain-fatty-acid--CoA ligase (561 aa).

Position 213–224 (213–224 (YTGGTTGVAKGA)) interacts with ATP.

It belongs to the ATP-dependent AMP-binding enzyme family. It depends on Mg(2+) as a cofactor.

It localises to the membrane. The catalysed reaction is a long-chain fatty acid + ATP + CoA = a long-chain fatty acyl-CoA + AMP + diphosphate. It participates in lipid metabolism; fatty acid beta-oxidation. Functionally, catalyzes the esterification, concomitant with transport, of exogenous long-chain fatty acids into metabolically active CoA thioesters for subsequent degradation or incorporation into phospholipids. In Escherichia coli O6:H1 (strain CFT073 / ATCC 700928 / UPEC), this protein is Long-chain-fatty-acid--CoA ligase (fadD).